A 157-amino-acid polypeptide reads, in one-letter code: Transcriptional repressor NrdR (157 aa).

The tract at residues 1 to 22 is disordered; the sequence is MKCPYCSSPDSRVINSRPSDDG. A zinc finger lies at 3–34; it reads CPYCSSPDSRVINSRPSDDGASIRRRRECLTC. Residues 8–17 show a composition bias toward polar residues; sequence SPDSRVINSR. An ATP-cone domain is found at 49–136; sequence LMVVKRSGVR…VYRDFDSLER (88 aa).

This sequence belongs to the NrdR family. The cofactor is Zn(2+).

Functionally, negatively regulates transcription of bacterial ribonucleotide reductase nrd genes and operons by binding to NrdR-boxes. The sequence is that of Transcriptional repressor NrdR from Deinococcus radiodurans (strain ATCC 13939 / DSM 20539 / JCM 16871 / CCUG 27074 / LMG 4051 / NBRC 15346 / NCIMB 9279 / VKM B-1422 / R1).